The chain runs to 441 residues: Histidine--tRNA ligase (441 aa).

Belongs to the class-II aminoacyl-tRNA synthetase family. Homodimer.

It localises to the cytoplasm. It catalyses the reaction tRNA(His) + L-histidine + ATP = L-histidyl-tRNA(His) + AMP + diphosphate + H(+). The polypeptide is Histidine--tRNA ligase (Koribacter versatilis (strain Ellin345)).